The primary structure comprises 390 residues: MIIVVGIGADGMTGLSEHSRSELRRATVIYGSKRQLALLDDTVTAERWEWPTPMLPAVQGLSPDGADLHVVASGDPLLHGIGSTLIRLFGHDNVTVLPHVSAVTLACARMGWNVYDTEVISLVTAQPHTAVRRGGRAIVLSGDRSTPQALAVLLTEHGRGDSKFSVLEQLGGPAERRRDGTARAWACDPPLDVDELNVIAVRYLLDERTSWAPDEAFAHDGQITKHPIRVLTLAALAPRPGQRLWDVGAGSGAIAVQWCRSWPGCTAVAFERDERRRRNIGFNAAAFGVSVDVRGDAPDAFDDAARPSVIFLGGGVTQPGLLEACLDSLPAGGNLVANAVTVESEAALAHAYSRLGGELRRFQHYLGEPLGGFTGWRPQLPVTQWSVTKR.

Belongs to the precorrin methyltransferase family.

The catalysed reaction is precorrin-6B + 2 S-adenosyl-L-methionine = precorrin-8X + 2 S-adenosyl-L-homocysteine + CO2 + 3 H(+). The protein operates within cofactor biosynthesis; adenosylcobalamin biosynthesis; cob(II)yrinate a,c-diamide from precorrin-2 (aerobic route): step 7/10. Catalyzes the methylation of both C-5 and C-15 in precorrin-6Y to form precorrin-8X. The chain is Precorrin-6Y C(5,15)-methyltransferase [decarboxylating] (cobL) from Mycobacterium tuberculosis (strain ATCC 25618 / H37Rv).